Here is a 426-residue protein sequence, read N- to C-terminus: UDP-N-acetylglucosamine 1-carboxyvinyltransferase (426 aa).

22–23 provides a ligand contact to phosphoenolpyruvate; the sequence is KN. Arg94 contacts UDP-N-acetyl-alpha-D-glucosamine. Cys118 serves as the catalytic Proton donor. Cys118 carries the post-translational modification 2-(S-cysteinyl)pyruvic acid O-phosphothioketal. UDP-N-acetyl-alpha-D-glucosamine is bound by residues 123 to 127, Asp309, and Ile331; that span reads RPVDL.

Belongs to the EPSP synthase family. MurA subfamily.

It is found in the cytoplasm. It catalyses the reaction phosphoenolpyruvate + UDP-N-acetyl-alpha-D-glucosamine = UDP-N-acetyl-3-O-(1-carboxyvinyl)-alpha-D-glucosamine + phosphate. Its pathway is cell wall biogenesis; peptidoglycan biosynthesis. Its function is as follows. Cell wall formation. Adds enolpyruvyl to UDP-N-acetylglucosamine. In Paracoccus denitrificans (strain Pd 1222), this protein is UDP-N-acetylglucosamine 1-carboxyvinyltransferase.